Reading from the N-terminus, the 150-residue chain is Ribonuclease K6 (150 aa).

Residues 1-23 form the signal peptide; that stretch reads MVLCFPLLLLLLVLWGPVCPLHA. His-38 functions as the Proton acceptor in the catalytic mechanism. Cystine bridges form between Cys-46-Cys-104, Cys-60-Cys-114, Cys-78-Cys-129, and Cys-85-Cys-92. N-linked (GlcNAc...) asparagine glycosylation occurs at Asn-55. Substrate-binding positions include 61–65 and Lys-86; that span reads KHQNT. Asn-100 carries an N-linked (GlcNAc...) asparagine glycan. Substrate is bound at residue Arg-105. His-145 serves as the catalytic Proton donor.

Belongs to the pancreatic ribonuclease family. As to quaternary structure, interacts (via N-terminus) with bacterial lipopolysaccharide (LPS). Highly expressed in spleen (at protein level). Has little or no expression in healthy kidneys (at protein level). Detected in interstitial leukocytes in infected kidneys (at protein level). Expressed in ureter where it localizes to urothelial and submucosal leukocytes (at protein level). Strong expression in lung and thymus, and lower expression in heart, placenta, pancreas, liver, brain and skeletal muscle. Also expressed in monocytes and neutrophils.

The protein resides in the secreted. It is found in the lysosome. The protein localises to the cytoplasmic granule. Its function is as follows. Ribonuclease which shows a preference for the pyrimidines uridine and cytosine. Has potent antibacterial activity against a range of Gram-positive and Gram-negative bacteria, including P.aeruginosa, A.baumanii, M.luteus, S.aureus, E.faecalis, E.faecium, S.saprophyticus and E.coli. Causes loss of bacterial membrane integrity, and also promotes agglutination of Gram-negative bacteria. Probably contributes to urinary tract sterility. Bactericidal activity is independent of RNase activity. The polypeptide is Ribonuclease K6 (RNASE6) (Homo sapiens (Human)).